We begin with the raw amino-acid sequence, 301 residues long: Heme A synthase (301 aa).

The Cytoplasmic segment spans residues 1-7 (MHKGLKR). A helical membrane pass occupies residues 8-28 (LGVITSLGVLLVLIQGALVTN). Residues 29–56 (TGSGEGCGQTWPLCFGQVIPLDPPPETV) lie on the Extracellular side of the membrane. Cys-35 and Cys-42 are joined by a disulfide. A helical transmembrane segment spans residues 57-77 (IEFSHRLVAGIVGMLVILMAI). Glu-58 is a catalytic residue. His-61 serves as a coordination point for heme o. Residues 78–92 (WSWRRLKHMPETRFL) are Cytoplasmic-facing. A helical transmembrane segment spans residues 93–113 (AVISVFMIIFQGLLGAGAVVF). Residues 114–117 (GQSD) are Extracellular-facing. Residues 118 to 138 (LIMALHFGFSALSFASVVLLT) traverse the membrane as a helical segment. Heme o is bound at residue His-123. The Cytoplasmic portion of the chain corresponds to 139–159 (RLAFEDSNPQKQYAPIVSKAY). A helical transmembrane segment spans residues 160–180 (KGYVIFVAIYSYVAIYTGAYV). Residues 181–215 (KHTNATLACSGFPLCNGQWVPDVFTEAIGVQLLHR) lie on the Extracellular side of the membrane. Cys-189 and Cys-195 are oxidised to a cystine. His-214 contributes to the heme b binding site. Residues 216-236 (SAAILLSLLLLVLFIWTVKTF) traverse the membrane as a helical segment. The Cytoplasmic portion of the chain corresponds to 237-240 (RASR). A helical membrane pass occupies residues 241–261 (VLVVCASLAMLLVIGQAASGV). Residues 262 to 274 (AVVLTYNATLTLG) lie on the Extracellular side of the membrane. The helical transmembrane segment at 275 to 295 (IFHALLISLLFTLLCYMVMLV) threads the bilayer. His-277 is a binding site for heme b. Topologically, residues 296 to 301 (TRHKAK) are cytoplasmic.

It belongs to the COX15/CtaA family. Type 1 subfamily. As to quaternary structure, interacts with CtaB. The cofactor is heme b.

Its subcellular location is the cell membrane. It catalyses the reaction Fe(II)-heme o + 2 A + H2O = Fe(II)-heme a + 2 AH2. It functions in the pathway porphyrin-containing compound metabolism; heme A biosynthesis; heme A from heme O: step 1/1. Its function is as follows. Catalyzes the conversion of heme O to heme A by two successive hydroxylations of the methyl group at C8. The first hydroxylation forms heme I, the second hydroxylation results in an unstable dihydroxymethyl group, which spontaneously dehydrates, resulting in the formyl group of heme A. The sequence is that of Heme A synthase from Shouchella clausii (strain KSM-K16) (Alkalihalobacillus clausii).